Reading from the N-terminus, the 275-residue chain is Large ribosomal subunit protein uL2 (275 aa).

Disordered regions lie at residues 28-48 and 223-275; these read KPYA…NNGR and VVMN…RNKK.

It belongs to the universal ribosomal protein uL2 family. As to quaternary structure, part of the 50S ribosomal subunit. Forms a bridge to the 30S subunit in the 70S ribosome.

Its function is as follows. One of the primary rRNA binding proteins. Required for association of the 30S and 50S subunits to form the 70S ribosome, for tRNA binding and peptide bond formation. It has been suggested to have peptidyltransferase activity; this is somewhat controversial. Makes several contacts with the 16S rRNA in the 70S ribosome. This Photobacterium profundum (strain SS9) protein is Large ribosomal subunit protein uL2.